The chain runs to 679 residues: Membrane-spanning 4-domains subfamily A member 14 (679 aa).

Transmembrane regions (helical) follow at residues 50 to 70 (ILLA…YIGF), 76 to 96 (LVVL…TGYL), 110 to 130 (VTGM…FTIL), and 141 to 161 (MPSF…LFFL). 4 disordered regions span residues 218–259 (VSQP…EKKP), 331–363 (SEQT…ILSQ), 469–491 (KEWK…LNQQ), and 505–633 (VQAK…QAQV). The span at 224 to 234 (KGREFVPDEQK) shows a compositional bias: basic and acidic residues. Residues 337–348 (SKSTSSHVKQSS) show a composition bias toward low complexity. The segment covering 469–478 (KEWKSEEELH) has biased composition (basic and acidic residues). 2 stretches are compositionally biased toward polar residues: residues 519–535 (DQQS…SLDQ) and 550–563 (KQAQ…QLPD). Over residues 580-601 (QSKDGQVKDQQTDKEQNSKKQT) the composition is skewed to basic and acidic residues. The span at 619-632 (GQFQNVQAEGQQAQ) shows a compositional bias: polar residues.

The protein belongs to the MS4A family.

The protein localises to the membrane. May be involved in signal transduction as a component of a multimeric receptor complex. The polypeptide is Membrane-spanning 4-domains subfamily A member 14 (MS4A14) (Homo sapiens (Human)).